The sequence spans 49 residues: MGKRKANHTISGMNAASAQGQGTGYNEEFANEPFTPAERQNNKKRKKNQ.

A disordered region spans residues 1 to 49 (MGKRKANHTISGMNAASAQGQGTGYNEEFANEPFTPAERQNNKKRKKNQ). Residues 8–20 (HTISGMNAASAQG) show a composition bias toward polar residues.

Belongs to the SspO family.

Its subcellular location is the spore core. This is Small, acid-soluble spore protein O from Bacillus cereus (strain ATCC 14579 / DSM 31 / CCUG 7414 / JCM 2152 / NBRC 15305 / NCIMB 9373 / NCTC 2599 / NRRL B-3711).